Consider the following 65-residue polypeptide: Ferredoxin-like protein in vnf region (65 aa).

2 consecutive 4Fe-4S ferredoxin-type domains span residues 2–30 (AMAI…FRDD) and 32–65 (YAIE…PLDD). Residues C10, C13, C16, C20, C39, C42, C50, and C54 each contribute to the [4Fe-4S] cluster site.

Requires [4Fe-4S] cluster as cofactor.

The protein is Ferredoxin-like protein in vnf region of Azotobacter vinelandii.